We begin with the raw amino-acid sequence, 404 residues long: MKFPIYLDYAATTPVEFEVMKEMMNYLTLEGEFGNPASRSHKFGWKAEEAVDIARNQIAELIHADSREIIFTSGATESNNLAIKGIAEFYKKKGNHIITCSTEHKATLDTCRYLENKGFDITYLNPLQNGTINIYELQEKIQKNTILVSIMHVNNEIGVIQDIHKISKICQSNNILFHVDAAQSIGKININLKQLKIDLMSFSAHKIYGPKGIGGLYIRRKPRVRLSAQIHGGGHEKGMRSGTLPVHQIVGMGIAYKIAKIKINSDFNYIKHLRNRLWNGIKNIEEIHLNSNFENTVPHILNVSFNYVEGESLIMALKNLAVSSGSACTSSSLEASYVLRSLGLKDELAHSSIRFSLGRFTTKEEIDYTIQLIHQSINRLRNLSPLWEMFKSGVDMNNVNWTHN.

Pyridoxal 5'-phosphate contacts are provided by residues 75-76 (AT), asparagine 155, glutamine 183, and 203-205 (SAH). At lysine 206 the chain carries N6-(pyridoxal phosphate)lysine. Position 243 (threonine 243) interacts with pyridoxal 5'-phosphate. Residue cysteine 328 is the Cysteine persulfide intermediate of the active site. Position 328 (cysteine 328) interacts with [2Fe-2S] cluster.

Belongs to the class-V pyridoxal-phosphate-dependent aminotransferase family. NifS/IscS subfamily. As to quaternary structure, homodimer. Forms a heterotetramer with IscU, interacts with other sulfur acceptors. The cofactor is pyridoxal 5'-phosphate.

It is found in the cytoplasm. The enzyme catalyses (sulfur carrier)-H + L-cysteine = (sulfur carrier)-SH + L-alanine. It functions in the pathway cofactor biosynthesis; iron-sulfur cluster biosynthesis. Its function is as follows. Master enzyme that delivers sulfur to a number of partners involved in Fe-S cluster assembly, tRNA modification or cofactor biosynthesis. Catalyzes the removal of elemental sulfur atoms from cysteine to produce alanine. Functions as a sulfur delivery protein for Fe-S cluster synthesis onto IscU, an Fe-S scaffold assembly protein, as well as other S acceptor proteins. This chain is Cysteine desulfurase IscS, found in Buchnera aphidicola subsp. Baizongia pistaciae (strain Bp).